Here is a 129-residue protein sequence, read N- to C-terminus: Large ribosomal subunit protein bL17 (129 aa).

Belongs to the bacterial ribosomal protein bL17 family. In terms of assembly, part of the 50S ribosomal subunit. Contacts protein L32.

The sequence is that of Large ribosomal subunit protein bL17 from Thiobacillus denitrificans (strain ATCC 25259 / T1).